We begin with the raw amino-acid sequence, 388 residues long: Succinate--CoA ligase [ADP-forming] subunit beta (388 aa).

Residues 9 to 244 (KQLFARYGMP…KSQEDEREAQ (236 aa)) form the ATP-grasp domain. Residues K46, 53–55 (GRG), E99, T102, and E107 contribute to the ATP site. N199 and D213 together coordinate Mg(2+). Substrate contacts are provided by residues N264 and 321 to 323 (GIV).

It belongs to the succinate/malate CoA ligase beta subunit family. As to quaternary structure, heterotetramer of two alpha and two beta subunits. The cofactor is Mg(2+).

The enzyme catalyses succinate + ATP + CoA = succinyl-CoA + ADP + phosphate. The catalysed reaction is GTP + succinate + CoA = succinyl-CoA + GDP + phosphate. The protein operates within carbohydrate metabolism; tricarboxylic acid cycle; succinate from succinyl-CoA (ligase route): step 1/1. In terms of biological role, succinyl-CoA synthetase functions in the citric acid cycle (TCA), coupling the hydrolysis of succinyl-CoA to the synthesis of either ATP or GTP and thus represents the only step of substrate-level phosphorylation in the TCA. The beta subunit provides nucleotide specificity of the enzyme and binds the substrate succinate, while the binding sites for coenzyme A and phosphate are found in the alpha subunit. This is Succinate--CoA ligase [ADP-forming] subunit beta from Yersinia enterocolitica serotype O:8 / biotype 1B (strain NCTC 13174 / 8081).